A 305-amino-acid polypeptide reads, in one-letter code: Transcription factor bHLH18 (305 aa).

Residues 41–67 (LKTTHISPNLHPFSSSNPPPPKHQPSS) form a disordered region. Over residues 44–56 (THISPNLHPFSSS) the composition is skewed to polar residues. The bHLH domain occupies 122-171 (SNAQDHILAERKRREKLTQRFVALSALIPGLKKMDKASVLGDAIKHIKYL). The interval 201–224 (DENHQPSSSSSSDGNRNSSSSNLP) is disordered. Positions 207–222 (SSSSSSDGNRNSSSSN) are enriched in low complexity.

As to quaternary structure, homodimer. Expressed in roots.

It localises to the nucleus. The chain is Transcription factor bHLH18 (BHLH18) from Arabidopsis thaliana (Mouse-ear cress).